Here is a 393-residue protein sequence, read N- to C-terminus: Cytochrome b (393 aa).

4 helical membrane-spanning segments follow: residues 33–53 (FGSLLGLCLMIQILTGFFLAM), 77–98 (WFLRNTHANGASILFICMYLHM), 113–133 (WNIGVIMFFLMMTTAFVGYVL), and 178–198 (FFAIHFTLPFITVGLTMLHLL). The heme b site is built by histidine 83 and histidine 97. Residues histidine 182 and histidine 196 each contribute to the heme b site. Residue histidine 201 participates in a ubiquinone binding. The next 4 helical transmembrane spans lie at 226 to 246 (YKDVLGFLLLLAALTALALFA), 288 to 308 (LGGVAALALSILALMVLPFIH), 320 to 340 (LSQLVFWLFVANIAILTWIGG), and 347 to 367 (FIIIGRIASVSYFTLILILMP).

Belongs to the cytochrome b family. The cytochrome bc1 complex contains 3 respiratory subunits (MT-CYB, CYC1 and UQCRFS1), 2 core proteins (UQCRC1 and UQCRC2) and probably 6 low-molecular weight proteins. Heme b serves as cofactor.

It is found in the mitochondrion inner membrane. Functionally, component of the ubiquinol-cytochrome c reductase complex (complex III or cytochrome b-c1 complex) that is part of the mitochondrial respiratory chain. The b-c1 complex mediates electron transfer from ubiquinol to cytochrome c. Contributes to the generation of a proton gradient across the mitochondrial membrane that is then used for ATP synthesis. This chain is Cytochrome b (mt-cyb), found in Synbranchus marmoratus (Marbled swamp eel).